A 430-amino-acid polypeptide reads, in one-letter code: C4-dicarboxylate transport protein (430 aa).

8 consecutive transmembrane segments (helical) span residues 9–29, 45–65, 79–99, 149–169, 185–205, 223–243, 308–328, and 356–376; these read VLYVQVIFAIIVGVILGHFYP, LIKMVIGPIIFCTVVTGIAGM, LLYFEIVSTFALLLGLAATHL, GEILQILLIALLFGSVLAHLG, VLFGIVHIVTKLAPIGAFGAM, LIGTFYLTSVVFVLVVLGAIA, IYMTMAVLFIAQATNIELTWM, and AATLAVVPTIPLSGMVLILGI.

This sequence belongs to the dicarboxylate/amino acid:cation symporter (DAACS) (TC 2.A.23) family.

Its subcellular location is the cell inner membrane. Responsible for the transport of dicarboxylates such as succinate, fumarate, and malate from the periplasm across the membrane. In Burkholderia orbicola (strain MC0-3), this protein is C4-dicarboxylate transport protein.